Consider the following 357-residue polypeptide: Cyclin-Y (357 aa).

A compositionally biased stretch (polar residues) spans 1-13 (MGNSSCCLRTRSS). Residues 1-23 (MGNSSCCLRTRSSSGEDKSYNND) are disordered. One can recognise a Cyclin N-terminal domain in the interval 186–284 (PDHRNIYRFV…RFLECLDFNI (99 aa)).

This sequence belongs to the cyclin family. In terms of assembly, interacts with pct-1; the interaction is required to activate pct-1.

The protein resides in the cytoplasm. It localises to the cell projection. It is found in the dendrite. Its subcellular location is the axon. Its function is as follows. In association with pct-1, regulates the trafficking of synaptic vesicle precursors in DA motor neurons by promoting anterograde trafficking to the axon and preventing dynein-dependent trafficking to the dendrite. May also regulate synaptic vesicle trafficking in DD motor neurons and in RIA interneurons. Involved in synapse formation during DD motor neuron remodeling by disassembling ventral presynaptic structures. May activate cdk-5. This is Cyclin-Y from Caenorhabditis elegans.